A 335-amino-acid polypeptide reads, in one-letter code: Gibberellin 2-beta-dioxygenase 3 (335 aa).

The Fe2OG dioxygenase domain occupies 175–278 (ESDSCLRMNH…RISMIYFAGP (104 aa)). Positions 202, 204, and 259 each coordinate Fe cation. Arg269 is a catalytic residue.

It belongs to the iron/ascorbate-dependent oxidoreductase family. GA2OX subfamily. Requires Fe(2+) as cofactor. Not expressed in the apex.

The enzyme catalyses gibberellin A1 + 2-oxoglutarate + O2 = gibberellin A8 + succinate + CO2. It functions in the pathway plant hormone biosynthesis; gibberellin biosynthesis. Functionally, catalyzes the 2-beta-hydroxylation of several biologically active gibberellins, leading to the homeostatic regulation of their endogenous level. Catabolism of gibberellins (GAs) plays a central role in plant development. Converts GA9/GA20 to GA51/GA29 and GA4/GA1 to GA34/GA8. The sequence is that of Gibberellin 2-beta-dioxygenase 3 (GA2OX3) from Arabidopsis thaliana (Mouse-ear cress).